The primary structure comprises 276 residues: Formamidopyrimidine-DNA glycosylase (276 aa).

The active-site Schiff-base intermediate with DNA is Pro-2. Glu-3 acts as the Proton donor in catalysis. Lys-60 (proton donor; for beta-elimination activity) is an active-site residue. 2 residues coordinate DNA: His-93 and Arg-112. The FPG-type zinc finger occupies 240 to 274 (NVYGKKGEPCVTCGTILEKTVVGGRGTHYCPICQP). The Proton donor; for delta-elimination activity role is filled by Arg-264.

This sequence belongs to the FPG family. Monomer. It depends on Zn(2+) as a cofactor.

It carries out the reaction Hydrolysis of DNA containing ring-opened 7-methylguanine residues, releasing 2,6-diamino-4-hydroxy-5-(N-methyl)formamidopyrimidine.. The enzyme catalyses 2'-deoxyribonucleotide-(2'-deoxyribose 5'-phosphate)-2'-deoxyribonucleotide-DNA = a 3'-end 2'-deoxyribonucleotide-(2,3-dehydro-2,3-deoxyribose 5'-phosphate)-DNA + a 5'-end 5'-phospho-2'-deoxyribonucleoside-DNA + H(+). In terms of biological role, involved in base excision repair of DNA damaged by oxidation or by mutagenic agents. Acts as a DNA glycosylase that recognizes and removes damaged bases. Has a preference for oxidized purines, such as 7,8-dihydro-8-oxoguanine (8-oxoG). Has AP (apurinic/apyrimidinic) lyase activity and introduces nicks in the DNA strand. Cleaves the DNA backbone by beta-delta elimination to generate a single-strand break at the site of the removed base with both 3'- and 5'-phosphates. The sequence is that of Formamidopyrimidine-DNA glycosylase from Bacillus cereus (strain ATCC 14579 / DSM 31 / CCUG 7414 / JCM 2152 / NBRC 15305 / NCIMB 9373 / NCTC 2599 / NRRL B-3711).